The chain runs to 750 residues: Phosphate transporter PHO1 homolog 7 (750 aa).

One can recognise an SPX domain in the interval 1–298 (MKFGKDFVRQ…SRSAAKPYME (298 aa)). At 1–350 (MKFGKDFVRQ…KVKKEKHRIT (350 aa)) the chain is on the cytoplasmic side. Residues 351 to 371 (FSTGFFVGCTVSLVVALVMFI) form a helical membrane-spanning segment. Over 372–391 (HARNIMGAVGHKVYMETMFP) the chain is Extracellular. Residues 392–412 (LYSLFAFVVLHMIMYASNIYF) form a helical membrane-spanning segment. Residues 413–435 (WKRYRVNYPFIFGFKEGTELGYR) lie on the Cytoplasmic side of the membrane. The helical transmembrane segment at 436 to 456 (HVLLLSFGLGTLALCAVLINL) threads the bilayer. Over 457–472 (DMEMDPNTNDYKTMTE) the chain is Extracellular. The helical transmembrane segment at 473-493 (LLPMFILALVVAILFCPFNIF) threads the bilayer. Topologically, residues 494–622 (YRSSRVFFLM…YSFNRGNIWK (129 aa)) are cytoplasmic. The EXS domain maps to 557 to 750 (RSSDVYSTFY…NYNEEEDRDS (194 aa)). A helical membrane pass occupies residues 623–643 (ISAWVFSALATFYGTYWDIVF). Residues 644-666 (DWGLLHRPSKHLLREKLLVPHKA) lie on the Extracellular side of the membrane. A helical transmembrane segment spans residues 667 to 687 (VYYVAIVLNIVLRMAWLQTVL). The Cytoplasmic segment spans residues 688–750 (DFNLSFLHRE…NYNEEEDRDS (63 aa)).

Belongs to the SYG1 (TC 2.A.94) family. Expressed in root tips, vascular cylinders of roots and filaments, leaf hydathodes, stem, receptacle and stigma apex.

It is found in the cell membrane. Functionally, may transport inorganic phosphate (Pi). This is Phosphate transporter PHO1 homolog 7 (PHO1-H7) from Arabidopsis thaliana (Mouse-ear cress).